The following is a 340-amino-acid chain: tRNA N6-adenosine threonylcarbamoyltransferase (340 aa).

Residues His-115 and His-119 each coordinate Fe cation. Residues 137–141 (IVSGG), Asp-170, Gly-183, Asp-187, and Asn-276 contribute to the substrate site. Asp-304 contacts Fe cation.

This sequence belongs to the KAE1 / TsaD family. Fe(2+) is required as a cofactor.

The protein resides in the cytoplasm. It carries out the reaction L-threonylcarbamoyladenylate + adenosine(37) in tRNA = N(6)-L-threonylcarbamoyladenosine(37) in tRNA + AMP + H(+). Functionally, required for the formation of a threonylcarbamoyl group on adenosine at position 37 (t(6)A37) in tRNAs that read codons beginning with adenine. Is involved in the transfer of the threonylcarbamoyl moiety of threonylcarbamoyl-AMP (TC-AMP) to the N6 group of A37, together with TsaE and TsaB. TsaD likely plays a direct catalytic role in this reaction. The chain is tRNA N6-adenosine threonylcarbamoyltransferase from Staphylococcus epidermidis (strain ATCC 35984 / DSM 28319 / BCRC 17069 / CCUG 31568 / BM 3577 / RP62A).